Reading from the N-terminus, the 488-residue chain is Ribulose bisphosphate carboxylase large chain 1 (488 aa).

Asparagine 128 and threonine 178 together coordinate substrate. The active-site Proton acceptor is lysine 180. Position 182 (lysine 182) interacts with substrate. The Mg(2+) site is built by lysine 206, aspartate 208, and glutamate 209. Lysine 206 carries the N6-carboxylysine modification. The active-site Proton acceptor is the histidine 298. Positions 299, 331, and 383 each coordinate substrate.

It belongs to the RuBisCO large chain family. Type I subfamily. Heterohexadecamer of 8 large chains and 8 small chains. Mg(2+) serves as cofactor.

It carries out the reaction 2 (2R)-3-phosphoglycerate + 2 H(+) = D-ribulose 1,5-bisphosphate + CO2 + H2O. The catalysed reaction is D-ribulose 1,5-bisphosphate + O2 = 2-phosphoglycolate + (2R)-3-phosphoglycerate + 2 H(+). RuBisCO catalyzes two reactions: the carboxylation of D-ribulose 1,5-bisphosphate, the primary event in carbon dioxide fixation, as well as the oxidative fragmentation of the pentose substrate. Both reactions occur simultaneously and in competition at the same active site. This Methylibium petroleiphilum (strain ATCC BAA-1232 / LMG 22953 / PM1) protein is Ribulose bisphosphate carboxylase large chain 1.